A 229-amino-acid chain; its full sequence is 2-C-methyl-D-erythritol 4-phosphate cytidylyltransferase (229 aa).

Belongs to the IspD/TarI cytidylyltransferase family. IspD subfamily.

It catalyses the reaction 2-C-methyl-D-erythritol 4-phosphate + CTP + H(+) = 4-CDP-2-C-methyl-D-erythritol + diphosphate. The protein operates within isoprenoid biosynthesis; isopentenyl diphosphate biosynthesis via DXP pathway; isopentenyl diphosphate from 1-deoxy-D-xylulose 5-phosphate: step 2/6. Its function is as follows. Catalyzes the formation of 4-diphosphocytidyl-2-C-methyl-D-erythritol from CTP and 2-C-methyl-D-erythritol 4-phosphate (MEP). This is 2-C-methyl-D-erythritol 4-phosphate cytidylyltransferase from Shouchella clausii (strain KSM-K16) (Alkalihalobacillus clausii).